The following is a 416-amino-acid chain: Protein-lysine N-trimethyltransferase SMYD5 (416 aa).

The 331-residue stretch at 21–351 (GSVEVRYVDS…PGEEICISYL (331 aa)) folds into the SET domain. The MYND-type zinc-finger motif lies at 98–136 (PELCSVRKDLHQNCPHCQVMYCSAECRLAAAEQYHQILC). Position 350 (Tyr-350) interacts with S-adenosyl-L-methionine. Residues 383-416 (EADDPNVTSEEEEEEDEEEGEPEDAELGDEMTDV) are disordered.

This sequence belongs to the class V-like SAM-binding methyltransferase superfamily. In terms of assembly, interacts with the N-CoR complex. Interacts with EHMT2 and CBX5. In terms of processing, ubiquitinated and degradaed by the proteasome in response to mild hypothermia (32 degrees Celsius), relieving repression of the SP1 gene.

The protein localises to the cytoplasm. The enzyme catalyses L-lysyl-[protein] + 3 S-adenosyl-L-methionine = N(6),N(6),N(6)-trimethyl-L-lysyl-[protein] + 3 S-adenosyl-L-homocysteine + 3 H(+). It catalyses the reaction L-lysyl(20)-[histone H4] + 3 S-adenosyl-L-methionine = N(6),N(6),N(6)-trimethyl-L-lysyl(20)-[histone H4] + 3 S-adenosyl-L-homocysteine + 3 H(+). The catalysed reaction is L-lysyl(36)-[histone H3] + 3 S-adenosyl-L-methionine = N(6),N(6),N(6)-trimethyl-L-lysyl(36)-[histone H3] + 3 S-adenosyl-L-homocysteine + 3 H(+). In terms of biological role, protein-lysine N-trimethyltransferase that specifically catalyzes trimethylation of 'Lys-22' of the RPL40/eL40 subunit of the 60S ribosome, thereby promoting translation elongation and protein synthesis. May also act as a histone methyltransferase in the context of histone octamers, but not on nucleosome substrates: trimethylates 'Lys-36' of histone H3 and 'Lys-20' of histone H4 to form H3K36me3 and H4K20me3, respectively. The histone methyltransferase activity, which is independent of its SET domain, is however unsure in vivo. In association with the NCoR corepressor complex, involved in the repression of toll-like receptor 4 (TLR4)-target inflammatory genes in macrophages, possibly by catalyzing the formation of H4K20me3 at the gene promoters. Plays an important role in embryonic stem (ES) cell self-renewal and differentiation. Maintains genome stability of ES cells during differentiation through regulation of heterochromatin formation and repression of endogenous repetitive DNA elements by promoting H4K20me3 marks. Acts as a regulator of the hypothermia response: its degradation in response to mild hypothermia relieves the formation of H3K36me3 at gene promoters, allowing expression of the neuroprotective gene SP1. The protein is Protein-lysine N-trimethyltransferase SMYD5 of Mus musculus (Mouse).